A 537-amino-acid chain; its full sequence is Formimidoyltransferase-cyclodeaminase (537 aa).

The tract at residues 1-181 is formiminotransferase N-subdomain; that stretch reads MNKLVECVPN…GASVTGARSF (181 aa). Catalysis depends on His82, which acts as the For formimidoyltransferase activity. Residue 163–172 coordinates folate; the sequence is GPAKFIPSYG. The tract at residues 182–326 is formiminotransferase C-subdomain; it reads LIAYNVNILG…PKKRIIDYMV (145 aa). The linker stretch occupies residues 327–335; the sequence is QEDLKVTQP. Residues 336–537 are cyclodeaminase/cyclohydrolase; sequence LASMSVRGFV…VLEILSNRKE (202 aa). Catalysis depends on Asp413, which acts as the For cyclodeaminase activity.

This sequence in the C-terminal section; belongs to the cyclodeaminase/cyclohydrolase family. The protein in the N-terminal section; belongs to the formiminotransferase family. Homooctamer, including four polyglutamate binding sites. The subunits are arranged as a tetramer of dimers, and form a planar ring-shaped structure.

Its subcellular location is the cytoplasm. It is found in the cytosol. The protein localises to the golgi apparatus. The protein resides in the cytoskeleton. It localises to the microtubule organizing center. Its subcellular location is the centrosome. It is found in the centriole. It carries out the reaction 5-formimidoyltetrahydrofolate + L-glutamate = N-formimidoyl-L-glutamate + (6S)-5,6,7,8-tetrahydrofolate. The catalysed reaction is 5-formimidoyltetrahydrofolate + 2 H(+) = (6R)-5,10-methenyltetrahydrofolate + NH4(+). It participates in amino-acid degradation; L-histidine degradation into L-glutamate; L-glutamate from N-formimidoyl-L-glutamate (transferase route): step 1/1. In terms of biological role, folate-dependent enzyme, that displays both transferase and deaminase activity. Serves to channel one-carbon units from formiminoglutamate to the folate pool. The sequence is that of Formimidoyltransferase-cyclodeaminase (ftcd) from Dictyostelium discoideum (Social amoeba).